A 328-amino-acid polypeptide reads, in one-letter code: uncharacterized protein (328 aa).

An N-terminal signal peptide occupies residues 1–32 (MFNFRLFSRRGKSLGLLAIVLLLFGFYSLKSS).

This sequence belongs to the glycosyltransferase 34 family.

The protein resides in the endoplasmic reticulum. This is an uncharacterized protein from Schizosaccharomyces pombe (strain 972 / ATCC 24843) (Fission yeast).